The following is a 213-amino-acid chain: Imidazole glycerol phosphate synthase subunit HisH (213 aa).

One can recognise a Glutamine amidotransferase type-1 domain in the interval 4–211 (NIGLIDYGMG…LAWLKKETKD (208 aa)). The active-site Nucleophile is the cysteine 82. Active-site residues include histidine 186 and glutamate 188.

In terms of assembly, heterodimer of HisH and HisF.

It is found in the cytoplasm. It catalyses the reaction 5-[(5-phospho-1-deoxy-D-ribulos-1-ylimino)methylamino]-1-(5-phospho-beta-D-ribosyl)imidazole-4-carboxamide + L-glutamine = D-erythro-1-(imidazol-4-yl)glycerol 3-phosphate + 5-amino-1-(5-phospho-beta-D-ribosyl)imidazole-4-carboxamide + L-glutamate + H(+). The enzyme catalyses L-glutamine + H2O = L-glutamate + NH4(+). Its pathway is amino-acid biosynthesis; L-histidine biosynthesis; L-histidine from 5-phospho-alpha-D-ribose 1-diphosphate: step 5/9. Its function is as follows. IGPS catalyzes the conversion of PRFAR and glutamine to IGP, AICAR and glutamate. The HisH subunit catalyzes the hydrolysis of glutamine to glutamate and ammonia as part of the synthesis of IGP and AICAR. The resulting ammonia molecule is channeled to the active site of HisF. The polypeptide is Imidazole glycerol phosphate synthase subunit HisH (Prochlorococcus marinus (strain SARG / CCMP1375 / SS120)).